The chain runs to 486 residues: ATP synthase subunit beta (486 aa).

164 to 171 (GGAGVGKT) contacts ATP.

It belongs to the ATPase alpha/beta chains family. As to quaternary structure, F-type ATPases have 2 components, CF(1) - the catalytic core - and CF(0) - the membrane proton channel. CF(1) has five subunits: alpha(3), beta(3), gamma(1), delta(1), epsilon(1). CF(0) has four main subunits: a(1), b(1), b'(1) and c(9-12).

Its subcellular location is the cellular thylakoid membrane. It carries out the reaction ATP + H2O + 4 H(+)(in) = ADP + phosphate + 5 H(+)(out). Its function is as follows. Produces ATP from ADP in the presence of a proton gradient across the membrane. The catalytic sites are hosted primarily by the beta subunits. In Prochlorococcus marinus (strain MIT 9515), this protein is ATP synthase subunit beta.